A 479-amino-acid polypeptide reads, in one-letter code: Adenosylhomocysteinase (479 aa).

Substrate-binding residues include Thr-66, Asp-142, and Glu-203. 204-206 (TTT) contacts NAD(+). Substrate-binding residues include Lys-233 and Asp-237. NAD(+)-binding positions include Asn-238, 267 to 272 (GYGDVG), Glu-290, Asn-325, 346 to 348 (IGH), and Asn-394.

The protein belongs to the adenosylhomocysteinase family. It depends on NAD(+) as a cofactor.

The protein resides in the cytoplasm. It catalyses the reaction S-adenosyl-L-homocysteine + H2O = L-homocysteine + adenosine. Its pathway is amino-acid biosynthesis; L-homocysteine biosynthesis; L-homocysteine from S-adenosyl-L-homocysteine: step 1/1. In terms of biological role, may play a key role in the regulation of the intracellular concentration of adenosylhomocysteine. The polypeptide is Adenosylhomocysteinase (Nitratidesulfovibrio vulgaris (strain DSM 19637 / Miyazaki F) (Desulfovibrio vulgaris)).